Reading from the N-terminus, the 66-residue chain is UPF0370 protein YpfN (66 aa).

A helical membrane pass occupies residues Leu-4–Ile-24. The tract at residues Lys-39–Lys-66 is disordered. Positions Leu-42–Lys-51 are enriched in basic and acidic residues.

The protein belongs to the UPF0370 family.

The protein localises to the cell membrane. This chain is UPF0370 protein YpfN, found in Escherichia coli O139:H28 (strain E24377A / ETEC).